We begin with the raw amino-acid sequence, 62 residues long: Ferredoxin-3 (62 aa).

2 consecutive 4Fe-4S ferredoxin-type domains span residues 2-28 (SLKI…SAGS) and 29-62 (DIYV…IVKA). [4Fe-4S] cluster contacts are provided by C9, C12, C15, C19, C38, C41, C50, and C54.

The cofactor is [4Fe-4S] cluster.

In terms of biological role, ferredoxins are iron-sulfur proteins that transfer electrons in a wide variety of metabolic reactions. This Chlorobaculum tepidum (strain ATCC 49652 / DSM 12025 / NBRC 103806 / TLS) (Chlorobium tepidum) protein is Ferredoxin-3.